Consider the following 130-residue polypeptide: Small ribosomal subunit protein uS8 (130 aa).

It belongs to the universal ribosomal protein uS8 family. In terms of assembly, part of the 30S ribosomal subunit. Contacts proteins S5 and S12.

One of the primary rRNA binding proteins, it binds directly to 16S rRNA central domain where it helps coordinate assembly of the platform of the 30S subunit. This chain is Small ribosomal subunit protein uS8, found in Phytoplasma mali (strain AT).